Here is a 164-residue protein sequence, read N- to C-terminus: MTEAAPTRIYVDADACPVKDEIYRVAERHGLPVSVVAGSFIRVPTHPLIERIAAGSGMDAADDWIAERVQPGDIVVTADVPLASRCVKAGAEVLAPNGKPFSEESIGMTLAVRNLMTDLRSSGEITGGPRGFTPRDRSAFLAALDTTIRRIARRRPSPPAQPQT.

Belongs to the UPF0178 family.

The polypeptide is UPF0178 protein RPB_3201 (Rhodopseudomonas palustris (strain HaA2)).